The sequence spans 263 residues: H-2 class II histocompatibility antigen, A-U beta chain (263 aa).

A signal peptide spans Met1–Gly27. Residues Gly28–Leu120 are beta-1. The Extracellular segment spans residues Gly28 to Lys224. Cystine bridges form between Cys42–Cys104 and Cys143–Cys199. A glycan (N-linked (GlcNAc...) asparagine) is linked at Asn46. The tract at residues Glu121–Trp214 is beta-2. The 89-residue stretch at Pro123 to Thr211 folds into the Ig-like C1-type domain. The connecting peptide stretch occupies residues Arg215 to Lys224. A helical transmembrane segment spans residues Met225 to Ile245. The Cytoplasmic portion of the chain corresponds to Arg246–Gln263.

This sequence belongs to the MHC class II family.

The protein resides in the membrane. This Mus musculus (Mouse) protein is H-2 class II histocompatibility antigen, A-U beta chain.